Reading from the N-terminus, the 323-residue chain is Glutamyl-Q tRNA(Asp) synthetase (323 aa).

L-glutamate is bound by residues 5 to 9 and Glu-41; that span reads RFAPT. The short motif at 8–18 is the 'HIGH' region element; that stretch reads PTPSGALHLGN. Positions 105, 107, 129, and 133 each coordinate Zn(2+). Tyr-193 and Arg-211 together coordinate L-glutamate. The short motif at 249–253 is the 'KMSKS' region element; that stretch reads RLAKR. Lys-252 serves as a coordination point for ATP.

Belongs to the class-I aminoacyl-tRNA synthetase family. GluQ subfamily. Requires Zn(2+) as cofactor.

Catalyzes the tRNA-independent activation of glutamate in presence of ATP and the subsequent transfer of glutamate onto a tRNA(Asp). Glutamate is transferred on the 2-amino-5-(4,5-dihydroxy-2-cyclopenten-1-yl) moiety of the queuosine in the wobble position of the QUC anticodon. The sequence is that of Glutamyl-Q tRNA(Asp) synthetase from Symbiobacterium thermophilum (strain DSM 24528 / JCM 14929 / IAM 14863 / T).